The following is a 478-amino-acid chain: Dihydrolipoyl dehydrogenase (478 aa).

FAD-binding positions include 36 to 45, Lys54, and Ala117; that span reads ERYSTLGGVC. Cysteines 45 and 50 form a disulfide. Residues 183 to 187, Glu206, Val239, and 270 to 273 contribute to the NAD(+) site; these read GGGII and AIGR. 2 residues coordinate FAD: Asp313 and Ala321. Residue His445 is the Proton acceptor of the active site.

The protein belongs to the class-I pyridine nucleotide-disulfide oxidoreductase family. In terms of assembly, homodimer. FAD serves as cofactor.

The protein resides in the cytoplasm. It carries out the reaction N(6)-[(R)-dihydrolipoyl]-L-lysyl-[protein] + NAD(+) = N(6)-[(R)-lipoyl]-L-lysyl-[protein] + NADH + H(+). In terms of biological role, lipoamide dehydrogenase is a component of the alpha-ketoacid dehydrogenase complexes. This chain is Dihydrolipoyl dehydrogenase (lpdA), found in Haemophilus influenzae (strain ATCC 51907 / DSM 11121 / KW20 / Rd).